A 660-amino-acid polypeptide reads, in one-letter code: DNA mismatch repair protein MutL (660 aa).

It belongs to the DNA mismatch repair MutL/HexB family.

In terms of biological role, this protein is involved in the repair of mismatches in DNA. It is required for dam-dependent methyl-directed DNA mismatch repair. May act as a 'molecular matchmaker', a protein that promotes the formation of a stable complex between two or more DNA-binding proteins in an ATP-dependent manner without itself being part of a final effector complex. This Solibacter usitatus (strain Ellin6076) protein is DNA mismatch repair protein MutL.